The primary structure comprises 1020 residues: Vacuolar membrane protease (1020 aa).

The Cytoplasmic portion of the chain corresponds to 1–11; the sequence is MKCHNPFGFRV. Residues 12-32 form a helical membrane-spanning segment; sequence GPVTFWTIIIYLALLVPLLWI. Topologically, residues 33 to 410 are vacuolar; that stretch reads HETVPPAPSS…GFAVFGLRGL (378 aa). Residues Asn50, Asn94, and Asn130 are each glycosylated (N-linked (GlcNAc...) asparagine). Residues His191 and Asp203 each contribute to the Zn(2+) site. The active-site Proton acceptor is the Glu237. Positions 238, 263, and 336 each coordinate Zn(2+). The chain crosses the membrane as a helical span at residues 411-431; that stretch reads FAWSLTLLIVSPLILAILVFI. Residues 432-467 lie on the Cytoplasmic side of the membrane; it reads LNRHDKLYFFSRKINVHNEGSEDPVSIGGFRGFTRF. Residues 468-488 traverse the membrane as a helical segment; sequence PIAVGFSGALTLASAFLLTKI. The Vacuolar portion of the chain corresponds to 489 to 491; the sequence is NPM. Residues 492–512 traverse the membrane as a helical segment; the sequence is IVYSSEYAVWGMMLSLFYVSL. Residues 513 to 529 lie on the Cytoplasmic side of the membrane; it reads WMTLKGSSAVRPSALQR. The chain crosses the membrane as a helical span at residues 530-550; the sequence is GYIHIWLFIVSWGLLIVVAVT. The Vacuolar segment spans residues 551–561; sequence EDRLKIASGYP. A helical transmembrane segment spans residues 562-582; sequence VVFLHSALFLSTVISFLELFG. The Cytoplasmic portion of the chain corresponds to 583–690; it reads LTKKHDYARR…RLPGWTWILQ (108 aa). A disordered region spans residues 609 to 648; it reads DDALIAPDTPNDEAEDSDGEDSEHEPTETTPLRAGGDSRV. Over residues 618-631 the composition is skewed to acidic residues; the sequence is PNDEAEDSDGEDSE. The helical transmembrane segment at 691–711 threads the bilayer; it reads FLLLAPINVILWGQIGLFAVA. Topologically, residues 712-724 are vacuolar; that stretch reads ATQAGGADGGSVL. A helical membrane pass occupies residues 725 to 745; sequence TTYLIIAVLSIVILVPLAPFI. The Cytoplasmic segment spans residues 746–750; the sequence is HRVHY. Residues 751-771 traverse the membrane as a helical segment; sequence YVPIILFAAFAGTLIYNLIAF. The Vacuolar segment spans residues 772-1020; that stretch reads PFSANNRYKI…VGLVRPVKRF (249 aa). Residues Asn851, Asn868, and Asn873 are each glycosylated (N-linked (GlcNAc...) asparagine).

Belongs to the peptidase M28 family. Requires Zn(2+) as cofactor.

The protein resides in the vacuole membrane. In terms of biological role, may be involved in vacuolar sorting and osmoregulation. This is Vacuolar membrane protease from Verticillium alfalfae (strain VaMs.102 / ATCC MYA-4576 / FGSC 10136) (Verticillium wilt of alfalfa).